A 132-amino-acid polypeptide reads, in one-letter code: Histone H2A (132 aa).

A compositionally biased stretch (basic residues) spans 1–13 (MSAKGKTGRKKAS). The disordered stretch occupies residues 1-21 (MSAKGKTGRKKASKGTSNSAK).

Belongs to the histone H2A family. The nucleosome is a histone octamer containing two molecules each of H2A, H2B, H3 and H4 assembled in one H3-H4 heterotetramer and two H2A-H2B heterodimers. The octamer wraps approximately 147 bp of DNA.

Its subcellular location is the nucleus. It localises to the chromosome. Functionally, core component of nucleosome. Nucleosomes wrap and compact DNA into chromatin, limiting DNA accessibility to the cellular machineries which require DNA as a template. Histones thereby play a central role in transcription regulation, DNA repair, DNA replication and chromosomal stability. DNA accessibility is regulated via a complex set of post-translational modifications of histones, also called histone code, and nucleosome remodeling. The sequence is that of Histone H2A from Plasmodium falciparum.